Reading from the N-terminus, the 753-residue chain is 5-methyltetrahydropteroyltriglutamate--homocysteine methyltransferase (753 aa).

5-methyltetrahydropteroyltri-L-glutamate contacts are provided by residues 17 to 20 and Lys117; that span reads RELK. L-homocysteine is bound by residues 431–433 and Glu484; that span reads IGS. Residues 431 to 433 and Glu484 each bind L-methionine; that span reads IGS. Residues 515–516 and Trp561 contribute to the 5-methyltetrahydropteroyltri-L-glutamate site; that span reads RC. Asp599 serves as a coordination point for L-homocysteine. Asp599 serves as a coordination point for L-methionine. Glu605 serves as a coordination point for 5-methyltetrahydropteroyltri-L-glutamate. Residues His641, Cys643, and Glu665 each contribute to the Zn(2+) site. His694 functions as the Proton donor in the catalytic mechanism. Cys726 is a Zn(2+) binding site.

This sequence belongs to the vitamin-B12 independent methionine synthase family. The cofactor is Zn(2+).

The catalysed reaction is 5-methyltetrahydropteroyltri-L-glutamate + L-homocysteine = tetrahydropteroyltri-L-glutamate + L-methionine. It functions in the pathway amino-acid biosynthesis; L-methionine biosynthesis via de novo pathway; L-methionine from L-homocysteine (MetE route): step 1/1. Functionally, catalyzes the transfer of a methyl group from 5-methyltetrahydrofolate to homocysteine resulting in methionine formation. The polypeptide is 5-methyltetrahydropteroyltriglutamate--homocysteine methyltransferase (Escherichia coli (strain ATCC 8739 / DSM 1576 / NBRC 3972 / NCIMB 8545 / WDCM 00012 / Crooks)).